The chain runs to 218 residues: N-(5'-phosphoribosyl)anthranilate isomerase (218 aa).

The protein belongs to the TrpF family.

The enzyme catalyses N-(5-phospho-beta-D-ribosyl)anthranilate = 1-(2-carboxyphenylamino)-1-deoxy-D-ribulose 5-phosphate. It functions in the pathway amino-acid biosynthesis; L-tryptophan biosynthesis; L-tryptophan from chorismate: step 3/5. This Rhodopseudomonas palustris (strain HaA2) protein is N-(5'-phosphoribosyl)anthranilate isomerase.